A 371-amino-acid chain; its full sequence is Cyanide hydratase (371 aa).

Positions Tyr6–Leu285 constitute a CN hydrolase domain. Glu46 serves as the catalytic Proton acceptor. Lys128 is a catalytic residue. Catalysis depends on Cys163, which acts as the Nucleophile. A compositionally biased stretch (basic and acidic residues) spans Gly339–Gly353. A disordered region spans residues Gly339–Leu371.

The protein belongs to the carbon-nitrogen hydrolase superfamily. Nitrilase family. In terms of assembly, oligomer of dimers, forming left-handed helical fibers.

The catalysed reaction is formamide = hydrogen cyanide + H2O. Catalyzes the hydration of cyanide to formamide. Degradation of cyanide may be important for plant pathogenic fungi in infection of cyanogenic plants. Also acts on 2-cyanopyridine, fumaronitrile and benzonitrile, albeit at a lower rate. This chain is Cyanide hydratase (nit), found in Stereum hirsutum (strain FP-91666) (White-rot fungus).